The primary structure comprises 621 residues: Cryptochrome-1 (621 aa).

The Photolyase/cryptochrome alpha/beta domain occupies 3-132; that stretch reads VNAVHWFRKG…EVIVRISHTL (130 aa). 3 short sequence motifs (LIR) span residues 50–54, 82–87, and 151–156; these read NRWRF, DVFPRL, and KRFQTL. Serine 252 is a binding site for FAD. 4 consecutive short sequence motifs (LIR) follow at residues 255–260, 271–276, 285–290, and 335–339; these read LRFGCL, DLYKKV, SLYGQL, and TGFPW. Glutamine 289 is an FAD binding site. FAD is bound at residue histidine 355. Residues 379 to 384 carry the LIR 8 motif; sequence KVFEEL. 387–389 serves as a coordination point for FAD; that stretch reads DAD. 5 consecutive short sequence motifs (LIR) follow at residues 395–400, 411–416, 430–435, 486–491, and 492–497; these read GSWMWL, HCYCPV, RRYLPV, QIYQQL, and SRYRGL. Positions 581 to 621 are disordered; the sequence is QSHLMQPGRASLGTGISAGKRPNPEEETQSVGPKVQRQSTN.

The protein belongs to the DNA photolyase class-1 family. Component of the circadian core oscillator, which includes the CRY proteins, CLOCK or NPAS2, BMAL1 or BMAL2, CSNK1E, and the PER proteins. The cofactor is FAD. (6R)-5,10-methylene-5,6,7,8-tetrahydrofolate serves as cofactor. Expressed in the pineal gland.

Its subcellular location is the cytoplasm. It localises to the nucleus. Its function is as follows. Transcriptional repressor which forms a core component of the circadian clock. The circadian clock, an internal time-keeping system, regulates various physiological processes through the generation of approximately 24 hour circadian rhythms in gene expression, which are translated into rhythms in metabolism and behavior. It is derived from the Latin roots 'circa' (about) and 'diem' (day) and acts as an important regulator of a wide array of physiological functions including metabolism, sleep, body temperature, blood pressure, endocrine, immune, cardiovascular, and renal function. Consists of two major components: the central clock, residing in the suprachiasmatic nucleus (SCN) of the brain, and the peripheral clocks that are present in nearly every tissue and organ system. Both the central and peripheral clocks can be reset by environmental cues, also known as Zeitgebers (German for 'timegivers'). The predominant Zeitgeber for the central clock is light, which is sensed by retina and signals directly to the SCN. The central clock entrains the peripheral clocks through neuronal and hormonal signals, body temperature and feeding-related cues, aligning all clocks with the external light/dark cycle. Circadian rhythms allow an organism to achieve temporal homeostasis with its environment at the molecular level by regulating gene expression to create a peak of protein expression once every 24 hours to control when a particular physiological process is most active with respect to the solar day. Transcription and translation of core clock components (CLOCK, NPAS2, BMAL1, BMAL2, PER1, PER2, PER3, CRY1 and CRY2) plays a critical role in rhythm generation, whereas delays imposed by post-translational modifications (PTMs) are important for determining the period (tau) of the rhythms (tau refers to the period of a rhythm and is the length, in time, of one complete cycle). A diurnal rhythm is synchronized with the day/night cycle, while the ultradian and infradian rhythms have a period shorter and longer than 24 hours, respectively. Disruptions in the circadian rhythms contribute to the pathology of cardiovascular diseases, cancer, metabolic syndromes and aging. A transcription/translation feedback loop (TTFL) forms the core of the molecular circadian clock mechanism. Transcription factors, CLOCK or NPAS2 and BMAL1 or BMAL2, form the positive limb of the feedback loop, act in the form of a heterodimer and activate the transcription of core clock genes and clock-controlled genes (involved in key metabolic processes), harboring E-box elements (5'-CACGTG-3') within their promoters. The core clock genes: PER1/2/3 and CRY1/2 which are transcriptional repressors form the negative limb of the feedback loop and interact with the CLOCK|NPAS2-BMAL1|BMAL2 heterodimer inhibiting its activity and thereby negatively regulating their own expression. This heterodimer also activates nuclear receptors NR1D1/2 and RORA/B/G, which form a second feedback loop and which activate and repress BMAL1 transcription, respectively. CRY1 and CRY2 have redundant functions but also differential and selective contributions at least in defining the pace of the SCN circadian clock and its circadian transcriptional outputs. More potent transcriptional repressor in cerebellum and liver than CRY2, though more effective in lengthening the period of the SCN oscillator. On its side, CRY2 seems to play a critical role in tuning SCN circadian period by opposing the action of CRY1. With CRY2, is dispensable for circadian rhythm generation but necessary for the development of intercellular networks for rhythm synchrony. Capable of translocating circadian clock core proteins such as PER proteins to the nucleus. Interacts with CLOCK-BMAL1 independently of PER proteins and is found at CLOCK-BMAL1-bound sites, suggesting that CRY may act as a molecular gatekeeper to maintain CLOCK-BMAL1 in a poised and repressed state until the proper time for transcriptional activation. Represses CLOCK-BMAL1-mediated transcriptional activation. In Gallus gallus (Chicken), this protein is Cryptochrome-1 (CRY1).